Reading from the N-terminus, the 583-residue chain is Putative glutaminase 3 (583 aa).

Positions 1–29 (MDNKEKEDEELSDELKDQPGPSEKPRTPT) are disordered. Residues Ser-216, Asn-265, Glu-311, Asn-318, Tyr-344, Tyr-396, and Val-414 each coordinate substrate. ANK repeat units follow at residues 482–514 (DGQN…CKDY), 515–548 (DDRT…PCDR), and 549–581 (YDRT…LKGQ).

Belongs to the glutaminase family.

The catalysed reaction is L-glutamine + H2O = L-glutamate + NH4(+). This chain is Putative glutaminase 3 (glna-3), found in Caenorhabditis elegans.